A 97-amino-acid polypeptide reads, in one-letter code: NADH dehydrogenase [ubiquinone] 1 alpha subcomplex subunit 2 (97 aa).

Cys-19 and Cys-53 are joined by a disulfide.

This sequence belongs to the complex I NDUFA2 subunit family. In terms of assembly, complex I is composed of at least 49 different subunits.

The protein localises to the mitochondrion inner membrane. Functionally, accessory subunit of the mitochondrial membrane respiratory chain NADH dehydrogenase (Complex I), that is believed not to be involved in catalysis. Complex I functions in the transfer of electrons from NADH to the respiratory chain. The immediate electron acceptor for the enzyme is believed to be ubiquinone. The polypeptide is NADH dehydrogenase [ubiquinone] 1 alpha subcomplex subunit 2 (Arabidopsis thaliana (Mouse-ear cress)).